The sequence spans 59 residues: Large ribosomal subunit protein bL32 (59 aa).

This sequence belongs to the bacterial ribosomal protein bL32 family.

The sequence is that of Large ribosomal subunit protein bL32 from Limosilactobacillus reuteri (strain DSM 20016) (Lactobacillus reuteri).